Consider the following 627-residue polypeptide: tRNA uridine 5-carboxymethylaminomethyl modification enzyme MnmG (627 aa).

Residues Gly13–Gly18, Val125, and Ser180 contribute to the FAD site. Gly274–Phe288 provides a ligand contact to NAD(+). Gln371 contacts FAD.

The protein belongs to the MnmG family. Homodimer. Heterotetramer of two MnmE and two MnmG subunits. Requires FAD as cofactor.

It is found in the cytoplasm. In terms of biological role, NAD-binding protein involved in the addition of a carboxymethylaminomethyl (cmnm) group at the wobble position (U34) of certain tRNAs, forming tRNA-cmnm(5)s(2)U34. The chain is tRNA uridine 5-carboxymethylaminomethyl modification enzyme MnmG from Francisella tularensis subsp. tularensis (strain FSC 198).